Reading from the N-terminus, the 385-residue chain is Glucans biosynthesis protein C (385 aa).

10 consecutive transmembrane segments (helical) span residues A17 to W37, M60 to L80, V91 to Q111, I137 to F157, K173 to I193, F212 to I232, L239 to L259, T274 to G294, A311 to T331, and W338 to I358.

Belongs to the acyltransferase 3 family. OpgC subfamily.

The protein resides in the cell membrane. The protein operates within glycan metabolism; osmoregulated periplasmic glucan (OPG) biosynthesis. Functionally, necessary for the succinyl substitution of periplasmic glucans. Could catalyze the transfer of succinyl residues from the cytoplasmic side of the membrane to the nascent glucan backbones on the periplasmic side of the membrane. The chain is Glucans biosynthesis protein C from Escherichia coli O139:H28 (strain E24377A / ETEC).